The following is a 230-amino-acid chain: Large ribosomal subunit protein uL1 (230 aa).

This sequence belongs to the universal ribosomal protein uL1 family. Part of the 50S ribosomal subunit.

Binds directly to 23S rRNA. The L1 stalk is quite mobile in the ribosome, and is involved in E site tRNA release. Its function is as follows. Protein L1 is also a translational repressor protein, it controls the translation of the L11 operon by binding to its mRNA. This chain is Large ribosomal subunit protein uL1, found in Methylobacillus flagellatus (strain ATCC 51484 / DSM 6875 / VKM B-1610 / KT).